Reading from the N-terminus, the 188-residue chain is Ion-translocating oxidoreductase complex subunit B (188 aa).

A hydrophobic region spans residues 1–23 (MIEAAVSMSALGLGLGLLLGVAA). Residues 29–88 (ESPPIVDAIEGILPGTNCGACGYPGCRGLAEAMSEGAAPVTACAPGGRDVALALAAIVET) enclose the 4Fe-4S domain. Cys-46, Cys-49, Cys-54, Cys-71, Cys-113, Cys-116, Cys-119, Cys-123, Cys-143, Cys-146, Cys-149, and Cys-153 together coordinate [4Fe-4S] cluster. 4Fe-4S ferredoxin-type domains lie at 104–133 (TVAF…GANR) and 134–163 (QIHT…ARVK).

This sequence belongs to the 4Fe4S bacterial-type ferredoxin family. RnfB subfamily. The complex is composed of six subunits: RnfA, RnfB, RnfC, RnfD, RnfE and RnfG. [4Fe-4S] cluster is required as a cofactor.

It localises to the cellular chromatophore membrane. Functionally, part of a membrane-bound complex that couples electron transfer with translocation of ions across the membrane. The polypeptide is Ion-translocating oxidoreductase complex subunit B (Cereibacter sphaeroides (strain ATCC 17023 / DSM 158 / JCM 6121 / CCUG 31486 / LMG 2827 / NBRC 12203 / NCIMB 8253 / ATH 2.4.1.) (Rhodobacter sphaeroides)).